A 97-amino-acid chain; its full sequence is Large ribosomal subunit protein eL21 (97 aa).

It belongs to the eukaryotic ribosomal protein eL21 family.

The protein is Large ribosomal subunit protein eL21 of Methanococcoides burtonii (strain DSM 6242 / NBRC 107633 / OCM 468 / ACE-M).